The primary structure comprises 373 residues: MKKYLLSLLAAVTYTTAQSVSGSAEGFASGVTGGGGATPVYPADTAELESLLSSEGEQVIVLTKTYDFTGTSATGTACYSWGTGEGCQLILQDDCGDTPSTTVTYDAAGKTPIPVASDKTLLGVGSEGVIKGKGLSFTDNVSNIIVQNIKITELNPEYVWGGDALTFDGSSNICIDHVETSLIGRVHYVFGYNPNSGITLSNNFINGETTYSTSCDGYQYWGLELVGKNDSITFKGNYLYKTSGRSPALSGSTKFHACNNVWSDNNGHAIEGNEKGQGLFEGNVFQEVATVVSSTFWEAGDLFLSSADGTGNDACASYIGRNCASSIYMNDGGDYTSYTDVSWLGDWSGLTIAECAEAREIEGTVPTSAGNTL.

Positions methionine 1 to alanine 17 are cleaved as a signal peptide. 2 cysteine pairs are disulfide-bonded: cysteine 78-cysteine 95 and cysteine 87-cysteine 215. 2 N-linked (GlcNAc...) asparagine glycosylation sites follow: asparagine 140 and asparagine 229. Arginine 245 is a catalytic residue. Residues cysteine 315 and cysteine 323 are joined by a disulfide bond.

Belongs to the polysaccharide lyase 1 family.

The protein localises to the secreted. It catalyses the reaction Eliminative cleavage of (1-&gt;4)-alpha-D-galacturonan methyl ester to give oligosaccharides with 4-deoxy-6-O-methyl-alpha-D-galact-4-enuronosyl groups at their non-reducing ends.. In terms of biological role, pectinolytic enzymes consist of four classes of enzymes: pectin lyase, polygalacturonase, pectin methylesterase and rhamnogalacturonase. Among pectinolytic enzymes, pectin lyase is the most important in depolymerization of pectin, since it cleaves internal glycosidic bonds of highly methylated pectins. This chain is Probable pectin lyase C (pelC), found in Emericella nidulans (strain FGSC A4 / ATCC 38163 / CBS 112.46 / NRRL 194 / M139) (Aspergillus nidulans).